A 254-amino-acid polypeptide reads, in one-letter code: MNNKISVYDKDNFFELYQKLRANPISLNEIIEKPTMLSLLPNLKGKKLLDLGCGTGGHLQLYLERGAAKVIGTDLSEKMLEQAEKDLQKCGQFSGRFSLYHLPIEKLAELPESHFDVITSSFAFHYIENFPTLLSTIHDKLSSNGTLIFSQEHPITTCHKEGERWEKNDKKQQVAYRLNHYREEGKRNRNWFKQPFQTYHRTTATIINNLIHARFQIEQMEEPMLADQPQWHNEFKDLSHRPPLLFIKARKVEK.

This is an uncharacterized protein from Haemophilus influenzae (strain ATCC 51907 / DSM 11121 / KW20 / Rd).